Consider the following 971-residue polypeptide: uncharacterized protein (971 aa).

The N-terminal stretch at 1–24 (MQSNLLKVLGVLAIVATLVCFIFA) is a signal peptide. The interval 127-146 (RTRPGKSNLDDSGQMIPIPR) is disordered. 6 consecutive transmembrane segments (helical) span residues 611–631 (IKAI…LGFA), 721–741 (LGLS…IVII), 753–773 (AFMA…FLLF), 795–815 (VVMM…LDFV), 832–852 (FIGT…INWF), and 865–885 (GVNM…YGYV). The disordered stretch occupies residues 933–971 (TGRAKSRLEQRNRTLEHAEQNSKKYKKRIGENTNEETLK). A compositionally biased stretch (basic and acidic residues) spans 938–954 (SRLEQRNRTLEHAEQNS).

The protein belongs to the TrbL/VirB6 family.

The protein resides in the cell membrane. This is an uncharacterized protein from Rickettsia prowazekii (strain Madrid E).